Here is a 323-residue protein sequence, read N- to C-terminus: Aldo-keto reductase family 1 member C3 (323 aa).

NADP(+)-binding positions include 20-24 and Asp50; that span reads GFGTY. Tyr55 serves as the catalytic Proton donor. His117 contributes to the substrate binding site. Residues 166–167, Gln190, 216–221, and 270–280 each bind NADP(+); these read SN, YSALGS, and KSYNEQRIREN.

The protein belongs to the aldo/keto reductase family.

It is found in the cytoplasm. The enzyme catalyses a 3alpha-hydroxysteroid + NADP(+) = a 3-oxosteroid + NADPH + H(+). The catalysed reaction is a 3alpha-hydroxysteroid + NAD(+) = a 3-oxosteroid + NADH + H(+). It catalyses the reaction prostaglandin F2alpha + NADP(+) = prostaglandin D2 + NADPH + H(+). It carries out the reaction testosterone + NAD(+) = androst-4-ene-3,17-dione + NADH + H(+). The enzyme catalyses testosterone + NADP(+) = androst-4-ene-3,17-dione + NADPH + H(+). The catalysed reaction is prostaglandin F2alpha + NADP(+) = prostaglandin H2 + NADPH + H(+). It catalyses the reaction prostaglandin D2 + NADPH + H(+) = 11beta-prostaglandin F2 + NADP(+). It carries out the reaction prostaglandin D2-ethanolamide + NADPH + H(+) = 11beta-prostaglandin F2-ethanolamide + NADP(+). The enzyme catalyses 17beta-estradiol + NADP(+) = estrone + NADPH + H(+). The catalysed reaction is 17beta-estradiol + NAD(+) = estrone + NADH + H(+). It catalyses the reaction (20S)-hydroxypregn-4-en-3-one + NADP(+) = progesterone + NADPH + H(+). It carries out the reaction (20S)-hydroxypregn-4-en-3-one + NAD(+) = progesterone + NADH + H(+). The enzyme catalyses 5alpha-androstane-3alpha,17beta-diol + NADP(+) = 17beta-hydroxy-5alpha-androstan-3-one + NADPH + H(+). The catalysed reaction is 5alpha-androstane-3alpha,17beta-diol + NAD(+) = 17beta-hydroxy-5alpha-androstan-3-one + NADH + H(+). It catalyses the reaction androsterone + NADPH + H(+) = 5alpha-androstane-3alpha,17beta-diol + NADP(+). It carries out the reaction 5alpha-androstane-3alpha,17beta-diol + NAD(+) = androsterone + NADH + H(+). The enzyme catalyses 5alpha-androstane-3beta,17beta-diol + NADP(+) = 17beta-hydroxy-5alpha-androstan-3-one + NADPH + H(+). The catalysed reaction is 9-cis-retinol + NADP(+) = 9-cis-retinal + NADPH + H(+). It participates in steroid metabolism. Cytosolic aldo-keto reductase that catalyzes the NADH and NADPH-dependent reduction of ketosteroids to hydroxysteroids. Acts as a NAD(P)(H)-dependent 3-, 17- and 20-ketosteroid reductase on the steroid nucleus and side chain and regulates the metabolism of androgens, estrogens and progesterone. Displays the ability to catalyze both oxidation and reduction in vitro, but most probably acts as a reductase in vivo since the oxidase activity measured in vitro is inhibited by physiological concentration of NADPH. Acts preferentially as a 17-ketosteroid reductase and has the highest catalytic efficiency of the AKR1C enzyme for the reduction of delta4-androstenedione to form testosterone. Reduces prostaglandin (PG) D2 to 11beta-prostaglandin F2, progesterone to 20alpha-hydroxyprogesterone and estrone to 17beta-estradiol. Catalyzes the transformation of the potent androgen dihydrotestosterone (DHT) into the less active form, 5-alpha-androstan-3-alpha,17-beta-diol (3-alpha-diol). Also displays retinaldehyde reductase activity toward 9-cis-retinal. This is Aldo-keto reductase family 1 member C3 (AKR1C3) from Pongo abelii (Sumatran orangutan).